We begin with the raw amino-acid sequence, 548 residues long: Chaperonin GroEL (548 aa).

ATP contacts are provided by residues 30–33, Lys51, 87–91, Gly415, 479–481, and Asp495; these read TLGP, DGTTT, and NAA. Residues 524 to 548 are disordered; that stretch reads LPKEDKSSDSSSSPAGGMGGMGGMM. Residues 539 to 548 show a composition bias toward gly residues; that stretch reads GGMGGMGGMM.

Belongs to the chaperonin (HSP60) family. As to quaternary structure, forms a cylinder of 14 subunits composed of two heptameric rings stacked back-to-back. Interacts with the co-chaperonin GroES.

It is found in the cytoplasm. The catalysed reaction is ATP + H2O + a folded polypeptide = ADP + phosphate + an unfolded polypeptide.. Together with its co-chaperonin GroES, plays an essential role in assisting protein folding. The GroEL-GroES system forms a nano-cage that allows encapsulation of the non-native substrate proteins and provides a physical environment optimized to promote and accelerate protein folding. The sequence is that of Chaperonin GroEL from Buchnera aphidicola subsp. Acyrthosiphon pisum (strain 5A).